The following is a 347-amino-acid chain: MRVADFHFDLPEALIARHPLPERRASRLLALDGPTGTLAHRQFADLLDYLRPGDLMVFNNTRVIPARLFGQKESGGKLEVLVERVLDQHRVLAHIRASKAPKPGTRILVEGGGSAEMLQRHDALFELAFAEPVLPLLERVGHMPLPPYIDRPDDAADRERYQTVYAQRAGAVAAPTAGLHFDEALLEAIRAKGVDTAFVTLHVGAGTFQPVRVERIEDHVMHREWLEVGQDVVDAVSACRARGGRVVAVGTTSVRSLESAARDGELKPFSGDTDIFIYPGRPFHVVDALVTNFHLPESTLLMLVSAFAGYPETMAAYAAAVAQGYRFFSYGDAMFITRNPAPRGPED.

The protein belongs to the QueA family. Monomer.

The protein resides in the cytoplasm. The catalysed reaction is 7-aminomethyl-7-carbaguanosine(34) in tRNA + S-adenosyl-L-methionine = epoxyqueuosine(34) in tRNA + adenine + L-methionine + 2 H(+). The protein operates within tRNA modification; tRNA-queuosine biosynthesis. Its function is as follows. Transfers and isomerizes the ribose moiety from AdoMet to the 7-aminomethyl group of 7-deazaguanine (preQ1-tRNA) to give epoxyqueuosine (oQ-tRNA). In Pseudomonas aeruginosa (strain UCBPP-PA14), this protein is S-adenosylmethionine:tRNA ribosyltransferase-isomerase.